The sequence spans 272 residues: Hemin import ATP-binding protein HmuV (272 aa).

The ABC transporter domain maps to 2 to 255; the sequence is LNAEHLHVAR…DLIERCYGFR (254 aa). Residue 34–41 coordinates ATP; that stretch reads GRNGAGKS.

Belongs to the ABC transporter superfamily. Heme (hemin) importer (TC 3.A.1.14.5) family. In terms of assembly, the complex is composed of two ATP-binding proteins (HmuV), two transmembrane proteins (HmuU) and a solute-binding protein (HmuT).

It localises to the cell inner membrane. In terms of biological role, part of the ABC transporter complex HmuTUV involved in hemin import. Responsible for energy coupling to the transport system. In Burkholderia thailandensis (strain ATCC 700388 / DSM 13276 / CCUG 48851 / CIP 106301 / E264), this protein is Hemin import ATP-binding protein HmuV.